Reading from the N-terminus, the 117-residue chain is Protein Rev (117 aa).

Phosphoserine; by host CK2 is present on residues Ser-5 and Ser-8. Residues 18–26 are homomultimerization; the sequence is LIKILYQSN. Residues 24–49 are disordered; the sequence is QSNPPPNTEGTTRQARRNRRRRWRAR. The Nuclear localization signal and RNA-binding (RRE) signature appears at 35 to 51; sequence TRQARRNRRRRWRARQR. Over residues 37 to 49 the composition is skewed to basic residues; the sequence is QARRNRRRRWRAR. A Nuclear export signal and binding to XPO1 motif is present at residues 74–85; sequence LQLPPLERLTLN. 2 positions are modified to phosphoserine; by host: Ser-93 and Ser-100. The span at 93 to 105 shows a compositional bias: polar residues; the sequence is SGTQGVGSPQISV. The segment at 93-117 is disordered; it reads SGTQGVGSPQISVESPAILGSGTEE.

It belongs to the HIV-1 REV protein family. In terms of assembly, homomultimer; when bound to the RRE. Multimeric assembly is essential for activity and may involve XPO1. Binds to human KPNB1, XPO1, TNPO1, RANBP5 and IPO7. Interacts with the viral Integrase. Interacts with human KHDRBS1. Interacts with human NAP1; this interaction decreases Rev multimerization and stimulates its activity. Interacts with human DEAD-box helicases DDX3 and DDX24; these interactions may serve for viral RNA export to the cytoplasm and packaging, respectively. Interacts with human PSIP1; this interaction may inhibit HIV-1 DNA integration by promoting dissociation of the Integrase-LEDGF/p75 complex. Asymmetrically arginine dimethylated at one site by host PRMT6. Methylation impairs the RNA-binding activity and export of viral RNA from the nucleus to the cytoplasm. In terms of processing, phosphorylated by protein kinase CK2. Presence of, and maybe binding to the N-terminus of the regulatory beta subunit of CK2 is necessary for CK2-mediated Rev's phosphorylation.

It localises to the host nucleus. Its subcellular location is the host nucleolus. It is found in the host cytoplasm. In terms of biological role, escorts unspliced or incompletely spliced viral pre-mRNAs (late transcripts) out of the nucleus of infected cells. These pre-mRNAs carry a recognition sequence called Rev responsive element (RRE) located in the env gene, that is not present in fully spliced viral mRNAs (early transcripts). This function is essential since most viral proteins are translated from unspliced or partially spliced pre-mRNAs which cannot exit the nucleus by the pathway used by fully processed cellular mRNAs. Rev itself is translated from a fully spliced mRNA that readily exits the nucleus. Rev's nuclear localization signal (NLS) binds directly to KPNB1/Importin beta-1 without previous binding to KPNA1/Importin alpha-1. KPNB1 binds to the GDP bound form of RAN (Ran-GDP) and targets Rev to the nucleus. In the nucleus, the conversion from Ran-GDP to Ran-GTP dissociates Rev from KPNB1 and allows Rev's binding to the RRE in viral pre-mRNAs. Rev multimerization on the RRE via cooperative assembly exposes its nuclear export signal (NES) to the surface. Rev can then form a complex with XPO1/CRM1 and Ran-GTP, leading to nuclear export of the complex. Conversion from Ran-GTP to Ran-GDP mediates dissociation of the Rev/RRE/XPO1/RAN complex, so that Rev can return to the nucleus for a subsequent round of export. Beside KPNB1, also seems to interact with TNPO1/Transportin-1, RANBP5/IPO5 and IPO7/RANBP7 for nuclear import. The nucleoporin-like HRB/RIP is an essential cofactor that probably indirectly interacts with Rev to release HIV RNAs from the perinuclear region to the cytoplasm. The protein is Protein Rev of Human immunodeficiency virus type 1 group M subtype A (isolate MAL) (HIV-1).